We begin with the raw amino-acid sequence, 458 residues long: MSLPTYSKLNIVILAAGKGTRMNSSKPKVLHALAGKPVLQHVLDTARRLNPSSIIVVYGFGGEIVPQALPADDIIWVKQAEQLGTGHAMQQALPYLEPDARTLILLGDVPLLTQESCTQLLTQQAALCLLTVSKDNPSGYGRIVRQGDAVKAIVEHKDAAEAQLAIREVNTGIMAAENTWLATWLPRLDNRNAQQEYYLTDIVAMAVADGQAVAAVQSNDEWQVAGINSKQDLAALERVYQGRYAARLLAKGVTLADPSRIDVRGELTTGRDVEIDVGCVFEGQVTLADNVRIGPYCVIRDATIGAGTTLAAYTHIDGATLAEDCRIGPYARLRPGTVLSDHAHIGNFVELKNAQVDSGSKINHLSYVGDATVGKQVNIGAGTITCNYDGVNKFRTVIEDNAFIGSDSQLVAPVTIKAGATIAAGSTITEDAPADKLTMSRVRQFTIENWKRPEKVKK.

A pyrophosphorylase region spans residues 1 to 230 (MSLPTYSKLN…EWQVAGINSK (230 aa)). Residues 14-17 (LAAG), lysine 28, glutamine 79, and 84-85 (GT) contribute to the UDP-N-acetyl-alpha-D-glucosamine site. Aspartate 108 is a binding site for Mg(2+). Residues glycine 141, glutamate 155, asparagine 170, and asparagine 228 each coordinate UDP-N-acetyl-alpha-D-glucosamine. Asparagine 228 is a binding site for Mg(2+). The tract at residues 231 to 251 (QDLAALERVYQGRYAARLLAK) is linker. Residues 252-458 (GVTLADPSRI…NWKRPEKVKK (207 aa)) are N-acetyltransferase. Residues arginine 334 and lysine 352 each contribute to the UDP-N-acetyl-alpha-D-glucosamine site. Histidine 364 (proton acceptor) is an active-site residue. UDP-N-acetyl-alpha-D-glucosamine is bound by residues tyrosine 367 and asparagine 378. Acetyl-CoA is bound by residues alanine 381, 387–388 (NY), serine 406, alanine 424, and arginine 441.

It in the N-terminal section; belongs to the N-acetylglucosamine-1-phosphate uridyltransferase family. In the C-terminal section; belongs to the transferase hexapeptide repeat family. Homotrimer. The cofactor is Mg(2+).

The protein resides in the cytoplasm. The catalysed reaction is alpha-D-glucosamine 1-phosphate + acetyl-CoA = N-acetyl-alpha-D-glucosamine 1-phosphate + CoA + H(+). It catalyses the reaction N-acetyl-alpha-D-glucosamine 1-phosphate + UTP + H(+) = UDP-N-acetyl-alpha-D-glucosamine + diphosphate. Its pathway is nucleotide-sugar biosynthesis; UDP-N-acetyl-alpha-D-glucosamine biosynthesis; N-acetyl-alpha-D-glucosamine 1-phosphate from alpha-D-glucosamine 6-phosphate (route II): step 2/2. The protein operates within nucleotide-sugar biosynthesis; UDP-N-acetyl-alpha-D-glucosamine biosynthesis; UDP-N-acetyl-alpha-D-glucosamine from N-acetyl-alpha-D-glucosamine 1-phosphate: step 1/1. It participates in bacterial outer membrane biogenesis; LPS lipid A biosynthesis. In terms of biological role, catalyzes the last two sequential reactions in the de novo biosynthetic pathway for UDP-N-acetylglucosamine (UDP-GlcNAc). The C-terminal domain catalyzes the transfer of acetyl group from acetyl coenzyme A to glucosamine-1-phosphate (GlcN-1-P) to produce N-acetylglucosamine-1-phosphate (GlcNAc-1-P), which is converted into UDP-GlcNAc by the transfer of uridine 5-monophosphate (from uridine 5-triphosphate), a reaction catalyzed by the N-terminal domain. The polypeptide is Bifunctional protein GlmU (Methylobacillus flagellatus (strain ATCC 51484 / DSM 6875 / VKM B-1610 / KT)).